Reading from the N-terminus, the 2841-residue chain is Neurofibromin (2841 aa).

Ala-2 carries the N-acetylalanine modification. A phosphoserine mark is found at Ser-866 and Ser-878. The Ras-GAP domain occupies His-1253 to Ile-1484. The CRAL-TRIO domain maps to Glu-1582–Lys-1740. A lipid binding region spans residues Glu-1582–Asp-1839. Phosphoserine occurs at positions 2190 and 2469. Thr-2516 bears the Phosphothreonine mark. A phosphoserine mark is found at Ser-2517, Ser-2523, Ser-2525, and Ser-2545. Residues Lys-2557–Arg-2573 carry the Bipartite nuclear localization signal motif. Phosphothreonine is present on Thr-2567. Ser-2599, Ser-2804, and Ser-2819 each carry phosphoserine. The segment at Ser-2786 to Val-2841 is disordered. The segment covering Gly-2818–Ala-2829 has biased composition (polar residues).

In terms of assembly, interacts with HTR6. Interacts with SPRED2. Ubiquitinated by RNF7/RBX2, leading to its degradation. In terms of tissue distribution, expressed predominantly in brain, spinal cord and testis. As to expression, expressed predominantly in adrenal gland, kidney, ovary and lung. Widely and more weakly expressed. Predominantly expressed in adrenal gland. In terms of tissue distribution, widely and more weakly expressed. Expressed mainly in testis.

Its subcellular location is the nucleus. The protein resides in the nucleolus. It localises to the cell membrane. Functionally, stimulates the GTPase activity of Ras. NF1 shows greater affinity for Ras GAP, but lower specific activity. May be a regulator of Ras activity. The chain is Neurofibromin (Nf1) from Mus musculus (Mouse).